The chain runs to 107 residues: U1-lycotoxin-Ls1e (107 aa).

Positions 1–20 (MMKVLVVFALLVTLISYSSS) are cleaved as a signal peptide. Residues 21-41 (EGIDDLEADELLSLMANEQTR) constitute a propeptide that is removed on maturation. 4 disulfides stabilise this stretch: C44/C59, C51/C68, C58/C86, and C70/C84.

It belongs to the neurotoxin 19 (CSTX) family. 04 (U1-Lctx) subfamily. As to expression, expressed by the venom gland.

The protein resides in the secreted. The sequence is that of U1-lycotoxin-Ls1e from Lycosa singoriensis (Wolf spider).